The sequence spans 71 residues: Small ribosomal subunit protein bS21 (71 aa).

Belongs to the bacterial ribosomal protein bS21 family.

The sequence is that of Small ribosomal subunit protein bS21 from Shewanella woodyi (strain ATCC 51908 / MS32).